The primary structure comprises 174 residues: Disulfide bond formation protein B (174 aa).

Over 1–17 (MSFQVVTGWLDNSPRRI) the chain is Cytoplasmic. A helical transmembrane segment spans residues 18-34 (FAFVSLASIGMLAFGQY). Over 35-52 (LQHVVGLEPCPMCIVQRY) the chain is Periplasmic. A disulfide bridge connects residues Cys-44 and Cys-47. A helical membrane pass occupies residues 53-67 (ALVLVAIIAGLTGAS). Topologically, residues 68–74 (GRKGLHL) are cytoplasmic. Residues 75–92 (GGAVLMLGSSGFGAYVAA) traverse the membrane as a helical segment. Over 93–148 (RQSWLQWYPPEVVSCGRDFYGMIETFPLQRAIPMIFKGSGDCSKVDWTFLGGSIAN) the chain is Periplasmic. An intrachain disulfide couples Cys-107 to Cys-134. The helical transmembrane segment at 149–167 (WTFVVFGLIVLLSLALIWR) threads the bilayer. The Cytoplasmic segment spans residues 168-174 (RVSRRVS).

It belongs to the DsbB family.

Its subcellular location is the cell inner membrane. In terms of biological role, required for disulfide bond formation in some periplasmic proteins. Acts by oxidizing the DsbA protein. The sequence is that of Disulfide bond formation protein B from Albidiferax ferrireducens (strain ATCC BAA-621 / DSM 15236 / T118) (Rhodoferax ferrireducens).